The following is a 331-amino-acid chain: MKVSKVYTTIDAHVAGEPLRIITGGVPEIKGETQLERRWYCMEHLDYLREVLMYEPRGHHGMYGCIITPPASAHADFGVLFMHNEGWSTMCGHGIIAVITVGIETGMFETKQKFIIDSPAGEVIAYAKYNGSEVESVSFENVPSFVYKKDVPIKIDNYEFQVDIAFGGAFYAVVDSKEFGLKVDFKDLSAIQQWGGKIKHYIESKMEVKHPLEEGLKGIYGVIFSDDPKGEGATLRNVTIFADGQVDRSPCGTGTSARIATLFEKGILQKGEIFIHECITDGEFEGEVLSVTAVHTYEAVVPKVTGNAFITGFHQFVVDPRDDLNRGFLLG.

This sequence belongs to the proline racemase family.

This is an uncharacterized protein from Bacillus anthracis.